A 614-amino-acid polypeptide reads, in one-letter code: UvrABC system protein C (614 aa).

The GIY-YIG domain maps to 26–104 (NLPGVYKMLG…IKEYRPPYNV (79 aa)). The UVR domain occupies 215 to 250 (SDIHTALIEKMEASAEELDFEKAVFYRDQLSMLREV).

The protein belongs to the UvrC family. In terms of assembly, interacts with UvrB in an incision complex.

It is found in the cytoplasm. Its function is as follows. The UvrABC repair system catalyzes the recognition and processing of DNA lesions. UvrC both incises the 5' and 3' sides of the lesion. The N-terminal half is responsible for the 3' incision and the C-terminal half is responsible for the 5' incision. This is UvrABC system protein C from Psychrobacter cryohalolentis (strain ATCC BAA-1226 / DSM 17306 / VKM B-2378 / K5).